Reading from the N-terminus, the 220-residue chain is HTH-type transcriptional repressor KstR (220 aa).

Residues 36-96 enclose the HTH tetR-type domain; the sequence is RERRKRILDA…SALGREFSRI (61 aa). The H-T-H motif DNA-binding region spans 59 to 78; sequence QMRAVADRADVAVGTLYRYF.

Homodimer.

Functionally, controls the expression of genes used for utilizing diverse lipids as energy sources. This Mycobacterium tuberculosis (strain ATCC 25618 / H37Rv) protein is HTH-type transcriptional repressor KstR (kstR).